We begin with the raw amino-acid sequence, 152 residues long: SsrA-binding protein (152 aa).

The segment covering K129–R140 has biased composition (basic and acidic residues). A disordered region spans residues K129–E152. A compositionally biased stretch (polar residues) spans E141 to E152.

The protein belongs to the SmpB family.

The protein resides in the cytoplasm. In terms of biological role, required for rescue of stalled ribosomes mediated by trans-translation. Binds to transfer-messenger RNA (tmRNA), required for stable association of tmRNA with ribosomes. tmRNA and SmpB together mimic tRNA shape, replacing the anticodon stem-loop with SmpB. tmRNA is encoded by the ssrA gene; the 2 termini fold to resemble tRNA(Ala) and it encodes a 'tag peptide', a short internal open reading frame. During trans-translation Ala-aminoacylated tmRNA acts like a tRNA, entering the A-site of stalled ribosomes, displacing the stalled mRNA. The ribosome then switches to translate the ORF on the tmRNA; the nascent peptide is terminated with the 'tag peptide' encoded by the tmRNA and targeted for degradation. The ribosome is freed to recommence translation, which seems to be the essential function of trans-translation. In Pelobacter propionicus (strain DSM 2379 / NBRC 103807 / OttBd1), this protein is SsrA-binding protein.